A 344-amino-acid chain; its full sequence is Melanocyte-stimulating hormone receptor (344 aa).

Over 1 to 37 the chain is Extracellular; that stretch reads MPMQGAQRKLLGSLNSTPTATSNLGLAANHTGAPCLE. N-linked (GlcNAc...) asparagine glycosylation is present at N29. A helical transmembrane segment spans residues 38–63; the sequence is VSIPDGLFLSLGLVSLVENVLVVAAI. The Cytoplasmic portion of the chain corresponds to 64–72; the sequence is AKNRNLHSS. The helical transmembrane segment at 73-93 threads the bilayer; that stretch reads MYCFICCLALSDLLVSGSNML. Residues 94-118 are Extracellular-facing; that stretch reads ETAIILLLEAGTLATRASVVQQLHN. The helical transmembrane segment at 119-140 threads the bilayer; it reads TIDVLTCSSMLCSLCFLGAIAV. At 141–163 the chain is on the cytoplasmic side; the sequence is DRYISIFYALRYHSIMTLPRAQR. The helical transmembrane segment at 164-183 threads the bilayer; that stretch reads AIAAIWVTSVLSSTLFITYY. The Extracellular portion of the chain corresponds to 184 to 191; the sequence is DHAAVLLC. Residues 192–211 traverse the membrane as a helical segment; it reads LVVFFLAMLVLMAVLYVHML. Residues 212–240 are Cytoplasmic-facing; sequence ARACQHAQGIIRLHNRQLPAHKGFGLRGA. A helical membrane pass occupies residues 241-266; that stretch reads ATLTILLGIFFLCWGPFFLHLTLVVF. At 267 to 279 the chain is on the extracellular side; sequence CPQHLTCNCIFKN. A helical transmembrane segment spans residues 280-300; that stretch reads FKVFLTLIICNTIIDPLIYAF. Residues 301–344 lie on the Cytoplasmic side of the membrane; sequence RSQELRRTLKEVLLCSWWPGCGAEGGGDSVWPGSCVTLRGPLPP. C315 carries the S-palmitoyl cysteine lipid modification.

It belongs to the G-protein coupled receptor 1 family. In terms of assembly, interacts with MGRN1, but does not undergo MGRN1-mediated ubiquitination; this interaction competes with GNAS-binding and thus inhibits agonist-induced cAMP production. Interacts with OPN3; the interaction results in a decrease in MC1R-mediated cAMP signaling and ultimately a decrease in melanin production in melanocytes.

The protein localises to the cell membrane. Receptor for MSH (alpha, beta and gamma) and ACTH. The activity of this receptor is mediated by G proteins which activate adenylate cyclase. Mediates melanogenesis, the production of eumelanin (black/brown) and phaeomelanin (red/yellow), via regulation of cAMP signaling in melanocytes. This chain is Melanocyte-stimulating hormone receptor (MC1R), found in Mico argentatus (Silvery marmoset).